Here is a 246-residue protein sequence, read N- to C-terminus: tRNA pseudouridine synthase A (246 aa).

Asp-51 (nucleophile) is an active-site residue. Tyr-105 contributes to the substrate binding site.

The protein belongs to the tRNA pseudouridine synthase TruA family.

The enzyme catalyses uridine(38/39/40) in tRNA = pseudouridine(38/39/40) in tRNA. Functionally, formation of pseudouridine at positions 38, 39 and 40 in the anticodon stem and loop of transfer RNAs. The polypeptide is tRNA pseudouridine synthase A (Thermoplasma volcanium (strain ATCC 51530 / DSM 4299 / JCM 9571 / NBRC 15438 / GSS1)).